The following is a 498-amino-acid chain: Putative antiporter subunit mnhD2 (498 aa).

14 helical membrane-spanning segments follow: residues 2 to 22, 32 to 52, 78 to 98, 108 to 128, 130 to 150, 161 to 181, 209 to 229, 240 to 260, 271 to 291, 308 to 328, 330 to 350, 369 to 389, 406 to 426, and 451 to 471; these read LSNL…ILVF, YLYL…LIYV, LSLI…AYGF, YHLP…FLTS, LFNL…LITL, IIYV…IGLL, ISLI…FMWL, LAAL…IRFF, IHPL…IGVI, IGFI…GAIF, LVND…LVYI, FGVA…FSGF, IGLA…FRIF, and ILSI…VVLN.

It belongs to the CPA3 antiporters (TC 2.A.63) subunit D family. May form a heterooligomeric complex that consists of seven subunits: mnhA2, mnhB2, mnhC2, mnhD2, mnhE2, mnhF2 and mnhG2.

The protein resides in the cell membrane. The protein is Putative antiporter subunit mnhD2 (mnhD2) of Staphylococcus aureus (strain Mu3 / ATCC 700698).